The chain runs to 407 residues: Endo-1,4-beta-xylanase (407 aa).

An N-terminal signal peptide occupies residues 1–28; it reads MRNVVRKPLTIGLALTLLLPMGMTATSA. In terms of domain architecture, GH10 spans 42 to 406; the sequence is ALNAPQLDQR…KPAYWAIIDH (365 aa). The active-site Proton donor is E187. The active-site Nucleophile is E293.

This sequence belongs to the glycosyl hydrolase 10 (cellulase F) family.

The protein localises to the secreted. The catalysed reaction is Endohydrolysis of (1-&gt;4)-beta-D-xylosidic linkages in xylans.. It functions in the pathway glycan degradation; xylan degradation. The polypeptide is Endo-1,4-beta-xylanase (Geobacillus stearothermophilus (Bacillus stearothermophilus)).